A 656-amino-acid polypeptide reads, in one-letter code: MTGAKRKKRSVLWGKMHTPHREDIKQWCKRRLPILEWAPQYNLKENLLPDTVSGIMLAVQQVAQGLSFAMLSSVHPVFGLYGSLFPAIIYAIFGMGRHVATGTFALTSLISANAVERLVPQSSRNLTTQSNSSVLGLSEFELQRIGVAAAVSFLGGVIQLVMFVLQLGSATFLLTEPVISAMTTGAATHVVTSQVKYLLGIKMPYISGPLGFFYIYAYVFENIKSVQLEALLFSLLSIIVLVLVKELNEQFKRKIKVVLPVDLVLIIAASFACYCTNMENTYGLEVVGHIPNGIPPPRAPPMNILSAVLTEAFGVALVGYVASLALAQGSAKKFKYSVDDNQEFLAHGLSNVIPSFLFCIPSAAAMGRTAGLYSTGAKTQVACLISCIFVLIVIYAIGPLLYWLPMCVLASIIVVGLKGMLIQFRDLKKYWNVDKIDWGIWISTYIFTICFAANVGLLFGVICTIAIVLGRFPRAKTLSITDMKEMELKVKTEMHDETSQQIKIISINNPLVFLNAKKFSADLMKIILKESDSNQPLDDVSKCEQNTLLSSLSNGNCNEEASQPCSSEKCSLVLNCSGLTFFDYTGVSTLVELYLDCKSRSVDVFLANCTASLIKAMTYYGDLDTEKPIFFDSVPAAISIIQSNKNLSKASDHSEV.

Residues 1-75 (MTGAKRKKRS…LSFAMLSSVH (75 aa)) lie on the Cytoplasmic side of the membrane. Residues 76-96 (PVFGLYGSLFPAIIYAIFGMG) form a helical membrane-spanning segment. The Extracellular segment spans residues 97-144 (RHVATGTFALTSLISANAVERLVPQSSRNLTTQSNSSVLGLSEFELQR). Residues 145 to 165 (IGVAAAVSFLGGVIQLVMFVL) traverse the membrane as a helical segment. A topological domain (cytoplasmic) is located at residue Q166. A helical membrane pass occupies residues 167–187 (LGSATFLLTEPVISAMTTGAA). Topologically, residues 188–199 (THVVTSQVKYLL) are extracellular. Residues 200–220 (GIKMPYISGPLGFFYIYAYVF) form a helical membrane-spanning segment. The Cytoplasmic portion of the chain corresponds to 221 to 222 (EN). Residues 223–243 (IKSVQLEALLFSLLSIIVLVL) traverse the membrane as a helical segment. The Extracellular segment spans residues 244-254 (VKELNEQFKRK). A helical transmembrane segment spans residues 255 to 275 (IKVVLPVDLVLIIAASFACYC). Over 276-306 (TNMENTYGLEVVGHIPNGIPPPRAPPMNILS) the chain is Cytoplasmic. Residues 307 to 327 (AVLTEAFGVALVGYVASLALA) form a helical membrane-spanning segment. Residues 328–343 (QGSAKKFKYSVDDNQE) are Extracellular-facing. A helical membrane pass occupies residues 344–364 (FLAHGLSNVIPSFLFCIPSAA). Residues 365-383 (AMGRTAGLYSTGAKTQVAC) are Cytoplasmic-facing. 2 helical membrane-spanning segments follow: residues 384–404 (LISC…LYWL) and 405–425 (PMCV…IQFR). Topologically, residues 426 to 448 (DLKKYWNVDKIDWGIWISTYIFT) are extracellular. Residues 449–469 (ICFAANVGLLFGVICTIAIVL) form a helical membrane-spanning segment. At 470–656 (GRFPRAKTLS…LSKASDHSEV (187 aa)) the chain is on the cytoplasmic side. Residues 492 to 641 (TEMHDETSQQ…DSVPAAISII (150 aa)) enclose the STAS domain. The tract at residues 641–656 (IQSNKNLSKASDHSEV) is membrane targeting.

The protein belongs to the SLC26A/SulP transporter (TC 2.A.53) family. Expressed in the Reissner's membrane epithelial cells in the cochlea (at protein level). Expressed in the retinal pigment epithelium (at protein level). Abundantly expressed in parietal cells on the glandular portion of the stomach. Lower levels are observed in the kidney, with expression in the proximal tubule and thick ascending limb of the loop of Henle. Also expressed in distal segments of nephron, in extraglomerular mesagial cells and a subpopulation of intercalated cells of outer medullary collecting ducts. Expressed in the thyroid gland.

It localises to the basolateral cell membrane. The protein localises to the recycling endosome membrane. The protein resides in the apical cell membrane. Its subcellular location is the lateral cell membrane. The enzyme catalyses chloride(in) = chloride(out). The catalysed reaction is iodide(out) = iodide(in). It catalyses the reaction bromide(in) = bromide(out). It carries out the reaction oxalate(in) = oxalate(out). The enzyme catalyses nitrate(in) = nitrate(out). The catalysed reaction is sulfate(in) = sulfate(out). It catalyses the reaction hydrogencarbonate(in) = hydrogencarbonate(out). It carries out the reaction D-gluconate(in) = D-gluconate(out). The enzyme catalyses thiocyanate(in) = thiocyanate(out). The catalysed reaction is hydrogencarbonate(in) + chloride(out) = hydrogencarbonate(out) + chloride(in). With respect to regulation, regulated by pH. Activity inhibited by all inhibitors of several anion channels and transporters, including 4,4'-Di-isothiocyanatostilbene-2,2'-disulfonic acid (DIDS), diphenylamine-2-carboxylic acid, glybenclamide and 5-Nitro-2-(3-phenylpropyl-amino)benzoic acid. In terms of biological role, acts as an anion channel mediating the transport of chloride, bromide, iodide, nitrate, sulfate, gluconate, thiocyanate and bicarbonate ions. Its permeability towards bicarbonate is weak and increases when pH is above 7. Mediates oxalate transport. Mediates thiocyanate transport in retinal pigment epithelium cells. Mediates iodide transport in the thyroid gland, playing an important role in the synthesis of thyroid hormones and the maintenance of thyroid function. Although it is an anion channel, according to PubMed:12736153 and PubMed:19723628 it has been shown to exhibit chloride-bicarbonate exchanger activity. The sequence is that of Anion exchange transporter from Mus musculus (Mouse).